Consider the following 502-residue polypeptide: Protein YdgA (502 aa).

An N-terminal signal peptide occupies residues 1–19 (MNKSLVAVGVIVALGVVWT).

It to E.coli YihF and H.influenzae HI_1236. As to quaternary structure, homodimer.

The protein localises to the cell inner membrane. The protein is Protein YdgA (ydgA) of Escherichia coli (strain K12).